Consider the following 550-residue polypeptide: Neuronal acetylcholine receptor subunit alpha-9-II (550 aa).

A signal peptide spans 1 to 20 (MRKMVPVVCFATMLLQVAHS). Topologically, residues 21-233 (AQGRYAQQLL…YTVLLQRRSS (213 aa)) are extracellular. A glycan (N-linked (GlcNAc...) asparagine) is linked at Asn-52. An intrachain disulfide couples Cys-150 to Cys-164. An N-linked (GlcNAc...) asparagine glycan is attached at Asn-165. Cys-214 and Cys-215 are joined by a disulfide. The next 3 helical transmembrane spans lie at 234–254 (FYIF…PLGF), 264–284 (VSLG…VAES), and 298–318 (YIAT…IMNI). Over 319-528 (HFCGAEAKPV…WKRVAKVMDR (210 aa)) the chain is Cytoplasmic. The tract at residues 357 to 439 (TSSSSSSSSS…HLSSSKYEGF (83 aa)) is disordered. Residues 358–367 (SSSSSSSSSS) are compositionally biased toward low complexity. Residues 413–422 (RHPKPRHQHH) are compositionally biased toward basic residues. A helical membrane pass occupies residues 529–549 (FFMWIFFIMVFLMSILIIGKA).

It belongs to the ligand-gated ion channel (TC 1.A.9) family. Acetylcholine receptor (TC 1.A.9.1) subfamily. As to expression, expressed in the brain, liver, olfactory mucosa, pituitary gland and hair cells of the saccule.

The protein resides in the postsynaptic cell membrane. It is found in the cell membrane. This Oncorhynchus mykiss (Rainbow trout) protein is Neuronal acetylcholine receptor subunit alpha-9-II.